Here is a 354-residue protein sequence, read N- to C-terminus: Guanine nucleotide-binding protein G(i) subunit alpha-1 (354 aa).

Gly-2 carries N-myristoyl glycine lipidation. A lipid anchor (S-palmitoyl cysteine) is attached at Cys-3. A G-alpha domain is found at 32 to 354; sequence REVKLLLLGA…KNNLKDCGLF (323 aa). Residues 35-48 form a G1 motif region; sequence KLLLLGAGESGKST. GTP-binding positions include 43 to 48, 150 to 151, and 175 to 178; these read ESGKST, DS, and LRTR. Ser-47 is a binding site for Mg(2+). The tract at residues 173–181 is G2 motif; the sequence is DVLRTRVKT. Thr-181 contributes to the Mg(2+) binding site. The G3 motif stretch occupies residues 196-205; sequence FKMFDVGGQR. GTP contacts are provided by residues 200–204, 269–272, and Ala-326; these read DVGGQ and NKKD. Residues 265 to 272 are G4 motif; that stretch reads ILFLNKKD. The G5 motif stretch occupies residues 324–329; it reads TCATDT.

Belongs to the G-alpha family. G(i/o/t/z) subfamily. In terms of assembly, heterotrimeric G proteins are composed of 3 units; alpha, beta and gamma. The alpha chain contains the guanine nucleotide binding site. Part of a spindle orientation complex. Identified in complex with the beta subunit GNB1 and the gamma subunit GNG1. Identified in complex with the beta subunit GNB1 and the gamma subunit GNG2. GTP binding causes dissociation of the heterotrimer, liberating the individual subunits so that they can interact with downstream effector proteins. Post-translationally, myristoylation at Gly-2 is required for membrane anchoring before palmitoylation. In terms of processing, palmitoylation at Cys-3 varies with membrane lipid composition.

The protein resides in the nucleus. Its subcellular location is the cytoplasm. It is found in the cell membrane. It localises to the cytoskeleton. The protein localises to the microtubule organizing center. The protein resides in the centrosome. Its subcellular location is the cell cortex. It is found in the membrane. It carries out the reaction GTP + H2O = GDP + phosphate + H(+). In terms of biological role, guanine nucleotide-binding proteins (G proteins) function as transducers downstream of G protein-coupled receptors (GPCRs) in numerous signaling cascades. The alpha chain contains the guanine nucleotide binding site and alternates between an active, GTP-bound state and an inactive, GDP-bound state. Signaling by an activated GPCR promotes GDP release and GTP binding. The alpha subunit has a low GTPase activity that converts bound GTP to GDP, thereby terminating the signal. Both GDP release and GTP hydrolysis are modulated by numerous regulatory proteins. Signaling is mediated via effector proteins, such as adenylate cyclase. Inhibits adenylate cyclase activity of ADCY1, ADCY5 and ADCY6, leading to decreased intracellular cAMP levels. Required for cortical dynein-dynactin complex recruitment during metaphase. The chain is Guanine nucleotide-binding protein G(i) subunit alpha-1 (GNAI1) from Gallus gallus (Chicken).